Reading from the N-terminus, the 272-residue chain is Glutamate racemase (272 aa).

Residues aspartate 10–serine 11 and tyrosine 42–glycine 43 contribute to the substrate site. The active-site Proton donor/acceptor is the cysteine 74. Asparagine 75–threonine 76 contributes to the substrate binding site. Cysteine 185 functions as the Proton donor/acceptor in the catalytic mechanism. Threonine 186–histidine 187 contributes to the substrate binding site.

Belongs to the aspartate/glutamate racemases family.

It catalyses the reaction L-glutamate = D-glutamate. The protein operates within cell wall biogenesis; peptidoglycan biosynthesis. Its function is as follows. Provides the (R)-glutamate required for cell wall biosynthesis. This Bacillus pumilus (strain SAFR-032) protein is Glutamate racemase.